We begin with the raw amino-acid sequence, 118 residues long: MGKLSTHVLDTAHGTPAAAMRVELYRIAASGTPELLKRVVTNLDGRTDAPLLSGDKMRTGIYELQFHVAEYFEGRGAELAHEPFLDLIPIRFGIADEDGNYHVPLLVSPWSYSTYRGS.

3 residues coordinate substrate: His7, Arg46, and Tyr115.

It belongs to the transthyretin family. 5-hydroxyisourate hydrolase subfamily. As to quaternary structure, homotetramer.

It catalyses the reaction 5-hydroxyisourate + H2O = 5-hydroxy-2-oxo-4-ureido-2,5-dihydro-1H-imidazole-5-carboxylate + H(+). Its function is as follows. Catalyzes the hydrolysis of 5-hydroxyisourate (HIU) to 2-oxo-4-hydroxy-4-carboxy-5-ureidoimidazoline (OHCU). This Brucella suis biovar 1 (strain 1330) protein is 5-hydroxyisourate hydrolase.